A 354-amino-acid polypeptide reads, in one-letter code: Lysophosphatidic acid receptor 3 (354 aa).

Topologically, residues 1 to 31 (MNECHYDKRMDFFYNRSNTDTADEWTGTKLV) are extracellular. Asparagine 15 is a glycosylation site (N-linked (GlcNAc...) asparagine). Residues 32-52 (IVLCVGTFFCLFIFFSNSLVI) form a helical membrane-spanning segment. Residues 53-67 (AAVITNRKFHFPFYY) lie on the Cytoplasmic side of the membrane. The chain crosses the membrane as a helical span at residues 68–88 (LLANLAAADFFAGIAYVFLMF). At 89 to 101 (NTGPVSKTLTVNR) the chain is on the extracellular side. The helical transmembrane segment at 102-124 (WFLRQGLLDTSLTASLANLLVIA) threads the bilayer. Topologically, residues 125 to 146 (VERHMSIMRMRVHSNLTKKRVT) are cytoplasmic. Residues 147-167 (LLILLVWAIAIFMGAVPTLGW) traverse the membrane as a helical segment. Topologically, residues 168 to 186 (NCLCNISACSSLAPIYSRS) are extracellular. Asparagine 172 carries an N-linked (GlcNAc...) asparagine glycan. A helical membrane pass occupies residues 187 to 207 (YLIFWTVSNLLAFFIMVAVYV). The Cytoplasmic segment spans residues 208 to 240 (RIYMYVKRKTNVLSPHTSGSISRRRAPMKLMKT). The chain crosses the membrane as a helical span at residues 241-261 (VMTVLGAFVVCWTPGLVVLLL). Residues 262–276 (DGLNCKQCNVQHVKR) lie on the Extracellular side of the membrane. The helical transmembrane segment at 277–295 (WFLLLALLNSVMNPIIYSY) threads the bilayer. At 296 to 354 (KDEDMYNTMRKMICCALQDSNTERRPSRNPSTIHSRSETGSQYLEDSISQGPVCNKNGS) the chain is on the cytoplasmic side. Cysteine 309 carries S-palmitoyl cysteine lipidation. The segment at 315–354 (SNTERRPSRNPSTIHSRSETGSQYLEDSISQGPVCNKNGS) is disordered. Polar residues predominate over residues 323-354 (RNPSTIHSRSETGSQYLEDSISQGPVCNKNGS).

It belongs to the G-protein coupled receptor 1 family. Most abundantly expressed in testes, kidney, and lung, with moderate levels in small intestine, and low levels in heart, stomach, spleen, and adult and perinatal brain. Little or no expression in embryonic brain, liver, or thymus.

It is found in the cell membrane. Its function is as follows. Receptor for lysophosphatidic acid (LPA), a mediator of diverse cellular activities. Seems to be coupled to the G(i)/G(o) and G(q) families of heteromeric G proteins. This is Lysophosphatidic acid receptor 3 (Lpar3) from Mus musculus (Mouse).